The primary structure comprises 231 residues: GDSL lipase Rv0518 (231 aa).

The N-terminal stretch at 1-20 is a signal peptide; it reads MSRPGTYVIGLTLLVGLVVG. Ser-46 serves as the catalytic Nucleophile. The active-site Proton donor is Asp-205. Residue His-208 is the Proton acceptor of the active site.

This sequence belongs to the 'GDSL' lipolytic enzyme family.

It is found in the secreted. Its subcellular location is the cell wall. The protein localises to the extracellular space. The catalysed reaction is a fatty acid ester + H2O = an aliphatic alcohol + a fatty acid + H(+). It carries out the reaction decanoate ester + H2O = decanoate + an aliphatic alcohol + H(+). It catalyses the reaction an octanoate ester + H2O = an aliphatic alcohol + octanoate + H(+). The enzyme catalyses a dodecanoate ester + H2O = an aliphatic alcohol + dodecanoate + H(+). The catalysed reaction is a tetradecanoate ester + H2O = an aliphatic alcohol + tetradecanoate + H(+). With respect to regulation, activity is inhibited by the serine modifier phenylmethylsulfonyl fluoride (PMSF). Its function is as follows. GDSL lipase that catalyzes the hydrolysis of p-nitrophenyl (pNP) esters. pNP-decanoate (C10) is the preferred substrate. It can also use pNP-octanoate (C8), pNP-dodecanoate (C12) and pNP-tetradecanoate (C14). Has lower activity with pNP-butyrate (C4), pNP-palmitate (C16) and pNP-stearate (C18). Does not show phospholipase A1 activity. Might help bacteria to utilize available lipids for its growth as well as provide resistance to various intracellular stresses by cell wall modulation resulting in enhanced intracellular survival. The chain is GDSL lipase Rv0518 from Mycobacterium tuberculosis (strain ATCC 25618 / H37Rv).